A 259-amino-acid chain; its full sequence is Steroidogenic acute regulatory-like protein 1 (259 aa).

A signal peptide spans 1–20 (MTLLPFTCLILLYSLGSVMS). An START domain is found at 43-254 (YATALKTCGE…NRRHFQNLKA (212 aa)).

The polypeptide is Steroidogenic acute regulatory-like protein 1 (strl-1) (Caenorhabditis elegans).